We begin with the raw amino-acid sequence, 253 residues long: Low affinity immunoglobulin gamma Fc region receptor III-B (253 aa).

Positions methionine 1 to alanine 20 are cleaved as a signal peptide. Over alanine 21–glutamine 207 the chain is Extracellular. Ig-like C2-type domains are found at residues proline 24–histidine 105 and glutamate 120–threonine 189. 2 cysteine pairs are disulfide-bonded: cysteine 47–cysteine 89 and cysteine 128–cysteine 172. 4 N-linked (GlcNAc...) asparagine glycosylation sites follow: asparagine 56, asparagine 63, asparagine 165, and asparagine 180. The chain crosses the membrane as a helical span at residues isoleucine 208–phenylalanine 226. The Cytoplasmic segment spans residues serine 227–lysine 253.

Forms a heterooligomeric complex with ITAM-containing signaling subunits FCER1G. Interacts (via transmembrane domain) with signaling subunits; this interaction is a prerequisite for receptor complex expression on the cell surface and intracellular signal transduction. Binds the Fc region of antigen-complexed IgG.

The protein resides in the cell membrane. In terms of biological role, receptor for the invariable Fc fragment of immunoglobulin gamma (IgG). Optimally activated upon binding of clustered antigen-IgG complexes displayed on cell surfaces, triggers lysis of antibody-coated cells, a process known as antibody-dependent cellular cytotoxicity (ADCC). Does not bind free monomeric IgG, thus avoiding inappropriate effector cell activation in the absence of antigenic trigger. Mediates IgG effector functions on natural killer (NK) cells. Binds antigen-IgG complexes generated upon infection and triggers NK cell-dependent cytokine production and degranulation to limit viral load and propagation. Fc-binding subunit that associates with FCER1G adapters to form functional signaling complexes. Following the engagement of antigen-IgG complexes, triggers phosphorylation of immunoreceptor tyrosine-based activation motif (ITAM)-containing adapters with subsequent activation of phosphatidylinositol 3-kinase signaling and sustained elevation of intracellular calcium that ultimately drive NK cell activation. Mediates enhanced ADCC in response to afucosylated IgGs. The protein is Low affinity immunoglobulin gamma Fc region receptor III-B (FCGR3B) of Oryctolagus cuniculus (Rabbit).